We begin with the raw amino-acid sequence, 81 residues long: Neuronatin (81 aa).

This sequence belongs to the neuronatin family.

In terms of biological role, may participate in the maintenance of segment identity in the hindbrain and pituitary development, and maturation or maintenance of the overall structure of the nervous system. May function as a regulatory subunit of ion channels. This is Neuronatin (NNAT) from Mesocricetus auratus (Golden hamster).